Here is a 468-residue protein sequence, read N- to C-terminus: 6-phosphogluconate dehydrogenase, decarboxylating (468 aa).

Residues Gly-10 to Gly-15, Asn-33 to Ser-35, Val-74 to Ala-76, and Asn-102 contribute to the NADP(+) site. Substrate is bound by residues Asn-102 and Ser-128–Gly-130. Lys-183 functions as the Proton acceptor in the catalytic mechanism. His-186 to Asn-187 contacts substrate. Glu-190 functions as the Proton donor in the catalytic mechanism. Positions 191, 260, 287, 445, and 451 each coordinate substrate.

The protein belongs to the 6-phosphogluconate dehydrogenase family. Homodimer.

It catalyses the reaction 6-phospho-D-gluconate + NADP(+) = D-ribulose 5-phosphate + CO2 + NADPH. It participates in carbohydrate degradation; pentose phosphate pathway; D-ribulose 5-phosphate from D-glucose 6-phosphate (oxidative stage): step 3/3. Functionally, catalyzes the oxidative decarboxylation of 6-phosphogluconate to ribulose 5-phosphate and CO(2), with concomitant reduction of NADP to NADPH. The sequence is that of 6-phosphogluconate dehydrogenase, decarboxylating (gnd) from Escherichia coli.